A 37-amino-acid polypeptide reads, in one-letter code: TVSDPPARPAVFHSREELMNYVRELNRYFAIVGRPRF.

Phe37 is modified (phenylalanine amide).

Belongs to the NPY family. In terms of tissue distribution, expressed by the venom duct.

The protein resides in the secreted. Causes hyperactivity such as jumping, rapid circling and tail flicking, when intraventricularly injected into mice brain. The chain is Neuropeptide Y1-like conopeptide from Conus betulinus (Beech cone).